A 764-amino-acid chain; its full sequence is Chloride anion exchanger (764 aa).

Residues 1–76 lie on the Cytoplasmic side of the membrane; that stretch reads MIEPFGNQYI…YRLKEWLLSD (76 aa). Residues 77–97 traverse the membrane as a helical segment; that stretch reads IVSGISTGIVAVLQGLAFALL. The Extracellular segment spans residues 98-99; that stretch reads VD. A helical transmembrane segment spans residues 100–120; that stretch reads IPPVYGLYASFFPAIIYLFFG. Over 121–124 the chain is Cytoplasmic; the sequence is TSRH. The chain crosses the membrane as a helical span at residues 125–145; sequence ISVGPFPILSMMVGLAVSGAV. The Extracellular segment spans residues 146–175; the sequence is SKAVPDRNATTLGLPNNSNNSSLLDDERVR. 3 N-linked (GlcNAc...) asparagine glycosylation sites follow: N153, N161, and N165. Residues 176-196 form a helical membrane-spanning segment; that stretch reads VAAAASVTVLSGIIQLAFGIL. A topological domain (cytoplasmic) is located at residue R197. A helical transmembrane segment spans residues 198–218; sequence IGFVVIYLSESLISGFTTAAA. Residues 219–257 are Extracellular-facing; that stretch reads VHVLVSQLKFIFQLTVPSHTDPVSIFKVLYSVFSQIEKT. Residues 258–278 traverse the membrane as a helical segment; that stretch reads NIADLVTALIVLLVVSIVKEI. Over 279–342 the chain is Cytoplasmic; that stretch reads NQRFKDKLPV…VETFQNTVGD (64 aa). The chain crosses the membrane as a helical span at residues 343–363; that stretch reads CFGIAMVAFAVAFSVASVYSL. Topologically, residues 364 to 374 are extracellular; the sequence is KYDYPLDGNQE. A helical membrane pass occupies residues 375 to 395; that stretch reads LIALGLGNIVCGVFRGFAGST. The Cytoplasmic portion of the chain corresponds to 396–411; it reads ALSRSAVQESTGGKTQ. Residues 412–432 form a helical membrane-spanning segment; sequence IAGLIGAIIVLIVVLAIGFLL. The Extracellular portion of the chain corresponds to 433–469; the sequence is APLQKSVLAALALGNLKGMLMQFAEIGRLWRKDKYDC. Residues 470–490 traverse the membrane as a helical segment; that stretch reads LIWIMTFIFTIVLGLGLGLAA. The Cytoplasmic segment spans residues 491–701; that stretch reads SVAFQLLTIV…EKLNRYEFFD (211 aa). Residues 525 to 720 form the STAS domain; it reads DYYDMYEPEG…LTIHDAVLHI (196 aa). Residues 761 to 764 carry the PDZ-binding motif; sequence ETKF.

This sequence belongs to the SLC26A/SulP transporter (TC 2.A.53) family. In terms of assembly, interacts with CFTR, SLC26A6 and NHERF1. Interacts with PDZK1. Interacts (via PDZ-binding motif) with NHERF4 (via the third PDZ domain); interaction leads to decreased expression of SLC26A3 on the cell membrane resulting in its reduced exchanger activity. N-glycosylation is required for efficient cell surface expression, and protection from proteolytic degradation. In terms of tissue distribution, expressed in the colon. Expression is significantly decreased in adenomas (polyps) and adenocarcinomas of the colon.

It is found in the apical cell membrane. The protein resides in the membrane. Its subcellular location is the cell membrane. It carries out the reaction hydrogencarbonate(in) + 2 chloride(out) = hydrogencarbonate(out) + 2 chloride(in). With respect to regulation, inhibited by acidic pH. Mediates chloride-bicarbonate exchange with a chloride bicarbonate stoichiometry of 2:1 in the intestinal epithelia. Plays a role in the chloride and bicarbonate homeostasis during sperm epididymal maturation and capacitation. The chain is Chloride anion exchanger (SLC26A3) from Homo sapiens (Human).